The sequence spans 213 residues: Large ribosomal subunit protein uL1 (213 aa).

This sequence belongs to the universal ribosomal protein uL1 family. In terms of assembly, part of the 50S ribosomal subunit.

Functionally, binds directly to 23S rRNA. Probably involved in E site tRNA release. Protein L1 is also a translational repressor protein, it controls the translation of its operon by binding to its mRNA. This Methanococcus maripaludis (strain C6 / ATCC BAA-1332) protein is Large ribosomal subunit protein uL1.